The primary structure comprises 920 residues: DNA ligase (920 aa).

NAD(+) contacts are provided by residues 90–94 (DAAYD), 139–140 (SL), and Glu173. Lys175 acts as the N6-AMP-lysine intermediate in catalysis. NAD(+)-binding residues include Arg196, Glu235, Lys360, and Lys384. 4 residues coordinate Zn(2+): Cys481, Cys484, Cys500, and Cys506. The tract at residues 662–691 (GEAAIESAETQGDTASETTGAPTGAEAPLG) is disordered. Residues 669–682 (AETQGDTASETTGA) show a composition bias toward polar residues. The region spanning 839–920 (SLPQTLAGKT…FAQLLATGTI (82 aa)) is the BRCT domain.

It belongs to the NAD-dependent DNA ligase family. LigA subfamily. Mg(2+) is required as a cofactor. Mn(2+) serves as cofactor.

It catalyses the reaction NAD(+) + (deoxyribonucleotide)n-3'-hydroxyl + 5'-phospho-(deoxyribonucleotide)m = (deoxyribonucleotide)n+m + AMP + beta-nicotinamide D-nucleotide.. DNA ligase that catalyzes the formation of phosphodiester linkages between 5'-phosphoryl and 3'-hydroxyl groups in double-stranded DNA using NAD as a coenzyme and as the energy source for the reaction. It is essential for DNA replication and repair of damaged DNA. The sequence is that of DNA ligase from Bifidobacterium longum (strain DJO10A).